We begin with the raw amino-acid sequence, 525 residues long: MSDPVIKRALVSVSDKSGVVEFCRELSSMGVEIFSTGGTLRKLQESGVAAASISTITGFPEIMDGRVKTLHPKIHGGLLAVRDNADHIAQARDNGIGFIDMVVVNLYPFQETVAKPDVTFEEAIENIDIGGPSMLRSAAKNHESVTVITESADYRTVLDEMRENNGATTRSTRLKLAGKVFTLTSRYDRAIADYLAASSEGEASSEAGSISVRLEKEIDMRYGENPHQNAGFYRMDDGSGSRSFEEYFRKLHGKDLSYNNMLDTAAATALIEEFRDEAPAVVIIKHTNPCGVAQADTLVEAYRKAFSTDTQSPFGGIIACNRPLDMETAKAIDEIFTEILIAPAYEEGVLDMLMKKKNRRLLLQRKPLLQEVTEYKSTRFGMLVQERDSRIASRDDLKVVTKRQPSAQELDDLMFAWKICKHVKSNTIVYVKNRQTVGVGAGQMSRVDSAKIARSKAAEAGLDLNGSAVASDAFFPFADGLLAAAEAGAMAVIQPGGSVRDDEVIAAADEHDLAMVFTSMRHFKH.

In terms of domain architecture, MGS-like spans 1-149; it reads MSDPVIKRAL…KNHESVTVIT (149 aa).

It belongs to the PurH family.

It carries out the reaction (6R)-10-formyltetrahydrofolate + 5-amino-1-(5-phospho-beta-D-ribosyl)imidazole-4-carboxamide = 5-formamido-1-(5-phospho-D-ribosyl)imidazole-4-carboxamide + (6S)-5,6,7,8-tetrahydrofolate. The enzyme catalyses IMP + H2O = 5-formamido-1-(5-phospho-D-ribosyl)imidazole-4-carboxamide. It participates in purine metabolism; IMP biosynthesis via de novo pathway; 5-formamido-1-(5-phospho-D-ribosyl)imidazole-4-carboxamide from 5-amino-1-(5-phospho-D-ribosyl)imidazole-4-carboxamide (10-formyl THF route): step 1/1. The protein operates within purine metabolism; IMP biosynthesis via de novo pathway; IMP from 5-formamido-1-(5-phospho-D-ribosyl)imidazole-4-carboxamide: step 1/1. This chain is Bifunctional purine biosynthesis protein PurH, found in Chlorobium phaeobacteroides (strain BS1).